Reading from the N-terminus, the 259-residue chain is Imidazole glycerol phosphate synthase subunit HisF (259 aa).

Active-site residues include aspartate 11 and aspartate 130.

This sequence belongs to the HisA/HisF family. As to quaternary structure, heterodimer of HisH and HisF.

It localises to the cytoplasm. The enzyme catalyses 5-[(5-phospho-1-deoxy-D-ribulos-1-ylimino)methylamino]-1-(5-phospho-beta-D-ribosyl)imidazole-4-carboxamide + L-glutamine = D-erythro-1-(imidazol-4-yl)glycerol 3-phosphate + 5-amino-1-(5-phospho-beta-D-ribosyl)imidazole-4-carboxamide + L-glutamate + H(+). It participates in amino-acid biosynthesis; L-histidine biosynthesis; L-histidine from 5-phospho-alpha-D-ribose 1-diphosphate: step 5/9. IGPS catalyzes the conversion of PRFAR and glutamine to IGP, AICAR and glutamate. The HisF subunit catalyzes the cyclization activity that produces IGP and AICAR from PRFAR using the ammonia provided by the HisH subunit. The protein is Imidazole glycerol phosphate synthase subunit HisF of Nitratidesulfovibrio vulgaris (strain DP4) (Desulfovibrio vulgaris).